The chain runs to 244 residues: 15,16-dihydrobiliverdin:ferredoxin oxidoreductase (244 aa).

Belongs to the HY2 family.

It carries out the reaction 15,16-dihydrobiliverdin + oxidized 2[4Fe-4S]-[ferredoxin] = biliverdin IXalpha + reduced 2[4Fe-4S]-[ferredoxin] + 2 H(+). Its function is as follows. Catalyzes the two-electron reduction of biliverdin IX-alpha at the C15 methine bridge. This Nostoc punctiforme (strain ATCC 29133 / PCC 73102) protein is 15,16-dihydrobiliverdin:ferredoxin oxidoreductase (pebA).